Consider the following 410-residue polypeptide: Neuroserpin (410 aa).

Positions methionine 1 to valine 16 are cleaved as a signal peptide. Phosphoserine is present on serine 83. Residues asparagine 157, asparagine 321, and asparagine 401 are each glycosylated (N-linked (GlcNAc...) asparagine). An O-linked (Xyl...) (chondroitin sulfate) serine glycan is attached at serine 403.

Belongs to the serpin family. As to expression, detected in adult pituitary and adrenal gland.

The protein resides in the secreted. The protein localises to the cytoplasmic vesicle. It localises to the secretory vesicle lumen. Its subcellular location is the perikaryon. In terms of biological role, serine protease inhibitor that inhibits plasminogen activators and plasmin but not thrombin. May be involved in the formation or reorganization of synaptic connections as well as for synaptic plasticity in the adult nervous system. May protect neurons from cell damage by tissue-type plasminogen activator. The sequence is that of Neuroserpin (Serpini1) from Rattus norvegicus (Rat).